Consider the following 109-residue polypeptide: MEDRVEISMLMDLYSSLLTEKQRSVMALYYDDDLSLAEIAELNKTSRQAIHDLIKRCDKQLLSYESKLNLLQKSMRKEKYIMNFLEELKEKYSVSDKDYLMFKEKLENL.

This sequence belongs to the UPF0122 family.

Might take part in the signal recognition particle (SRP) pathway. This is inferred from the conservation of its genetic proximity to ftsY/ffh. May be a regulatory protein. This Clostridium botulinum (strain Alaska E43 / Type E3) protein is UPF0122 protein CLH_1195.